A 577-amino-acid polypeptide reads, in one-letter code: Moesin (577 aa).

One can recognise an FERM domain in the interval 2–295; sequence PKTINVRVTT…GNHELYMRRR (294 aa). A Phosphoserine modification is found at Ser74. Lys79 carries the N6-acetyllysine modification. Lys83 carries the N6-succinyllysine modification. Residues 115–120 carry the [IL]-x-C-x-x-[DE] motif motif; the sequence is IYCPPE. Position 116 is a phosphotyrosine (Tyr116). An S-nitrosocysteine modification is found at Cys117. N6-acetyllysine is present on residues Lys139 and Lys165. Over residues 375–401 the composition is skewed to basic and acidic residues; sequence LEQERKRAQSEAEKLAKERQEAEEAKE. 2 disordered regions span residues 375-409 and 466-518; these read LEQERKRAQSEAEKLAKERQEAEEAKEALLQASQD and AMST…NERV. Phosphoserine is present on Ser407. The span at 476 to 487 shows a compositional bias: acidic residues; that stretch reads AENEQDEQDENG. The segment covering 492–518 has biased composition (basic and acidic residues); the sequence is AELRADAMAKDRSEEERTTEAEKNERV. Ser527 bears the Phosphoserine mark. Phosphothreonine; by ROCK2 and STK10 is present on Thr558.

In terms of assembly, in resting T-cells, part of a PAG1-NHERF1-MSN complex which is disrupted upon TCR activation. Interacts with NHERF1. Interacts with PPP1R16B. Interacts with PDZD8. Interacts with SELPLG and SYK; these interactions mediate the activation of SYK by SELPLG. Interacts with PDPN (via cytoplasmic domain); this interaction activates RHOA and promotes epithelial-mesenchymal transition. Interacts with SPN/CD43 cytoplasmic tail. Interacts with CD44. Interacts with ICAM2. Interacts with ICAM3 (via C-terminus). Interacts with PDZD8. Interacts with F-actin. Interacts with CD46. Interacts with PTPN6. Phosphorylation on Thr-558 is crucial for the formation of microvilli-like structures. Phosphorylation by ROCK2 suppresses the head-to-tail association of the N-terminal and C-terminal halves resulting in an opened conformation which is capable of actin and membrane-binding. Phosphorylation on Thr-558 by STK10 negatively regulates lymphocyte migration and polarization. Post-translationally, S-nitrosylation of Cys-117 is induced by interferon-gamma and oxidatively-modified low-densitity lipoprotein (LDL(ox)) implicating the iNOS-S100A8/9 transnitrosylase complex.

Its subcellular location is the cell membrane. It is found in the cytoplasm. The protein localises to the cytoskeleton. It localises to the apical cell membrane. The protein resides in the cell projection. Its subcellular location is the microvillus membrane. It is found in the microvillus. A head-to-tail association, of the N-terminal and C-terminal halves results in a closed conformation (inactive form) which is incapable of actin or membrane-binding. Its function is as follows. Ezrin-radixin-moesin (ERM) family protein that connects the actin cytoskeleton to the plasma membrane and thereby regulates the structure and function of specific domains of the cell cortex. Tethers actin filaments by oscillating between a resting and an activated state providing transient interactions between moesin and the actin cytoskeleton. Once phosphorylated on its C-terminal threonine, moesin is activated leading to interaction with F-actin and cytoskeletal rearrangement. These rearrangements regulate many cellular processes, including cell shape determination, membrane transport, and signal transduction. The role of moesin is particularly important in immunity acting on both T and B-cells homeostasis and self-tolerance, regulating lymphocyte egress from lymphoid organs. Modulates phagolysosomal biogenesis in macrophages. Participates also in immunologic synapse formation. This chain is Moesin, found in Bos taurus (Bovine).